Reading from the N-terminus, the 741-residue chain is Transketolase, chloroplastic (741 aa).

The span at M1–H19 shows a compositional bias: low complexity. Residues M1–L33 are disordered. Residues M1–A66 constitute a chloroplast transit peptide. The span at L24–L33 shows a compositional bias: polar residues. Position 103 (H103) interacts with substrate. Thiamine diphosphate contacts are provided by residues H143 and G192–L194. D233 is a Mg(2+) binding site. Residues G234 and N263 each contribute to the thiamine diphosphate site. 2 residues coordinate Mg(2+): N263 and I265. Substrate-binding residues include H340, R434, and S461. H340 contributes to the thiamine diphosphate binding site. Thiamine diphosphate contacts are provided by E488 and F515. The active-site Proton donor is the E488. Positions 539, 547, and 598 each coordinate substrate.

This sequence belongs to the transketolase family. Homodimer. The cofactor is Mg(2+). Requires Ca(2+) as cofactor. It depends on Mn(2+) as a cofactor. Co(2+) is required as a cofactor. Thiamine diphosphate serves as cofactor.

It localises to the plastid. Its subcellular location is the chloroplast thylakoid membrane. It carries out the reaction D-sedoheptulose 7-phosphate + D-glyceraldehyde 3-phosphate = aldehydo-D-ribose 5-phosphate + D-xylulose 5-phosphate. It participates in carbohydrate biosynthesis; Calvin cycle. In terms of biological role, catalyzes the reversible transfer of a two-carbon ketol group from fructose-6-phosphate or sedoheptulose-7-phosphate to glyceraldehyde-3-phosphate to yield xylulose-5-phosphate and erythrose-4-phosphate or ribose-5-phosphate, respectively. This chain is Transketolase, chloroplastic, found in Spinacia oleracea (Spinach).